Reading from the N-terminus, the 949-residue chain is Protocadherin alpha-11 (949 aa).

A signal peptide spans 1–29 (MFGFQRRGLGTPRLQLWLLLLEFWEVGSG). Cadherin domains are found at residues 30–133 (QLHY…PPVF), 157–242 (ASDA…DPEF), 243–349 (DKSE…SPEV), 350–454 (AVTS…APAF), 455–564 (AQPE…APAL), and 580–677 (VPRS…APKA). Topologically, residues 30-696 (QLHYSVSEEA…SPEAALVDVN (667 aa)) are extracellular. Residues asparagine 265 and asparagine 304 are each glycosylated (N-linked (GlcNAc...) asparagine). Asparagine 547 carries N-linked (GlcNAc...) asparagine glycosylation. A helical transmembrane segment spans residues 697 to 717 (VYLIIAICVVSSLLVLTLLLY). Residues 718–949 (TALWWSATPT…GNSTTDNSDQ (232 aa)) are Cytoplasmic-facing. 2 PXXP repeats span residues 733–736 (PGKP) and 773–776 (PSLP). The tract at residues 733–893 (PGKPTLVCSR…PDKFIIPGSP (161 aa)) is 6 X 4 AA repeats of P-X-X-P. 2 disordered regions span residues 753–807 (RRQR…DWRY) and 826–949 (ILRA…NSDQ). Residues 780–789 (NKEEEGERQE) show a composition bias toward basic and acidic residues. PXXP repeat units follow at residues 795 to 798 (PGQP), 831 to 834 (PGGP), 872 to 875 (PGNP), and 890 to 893 (PGSP). Over residues 908 to 922 (DKSDFITFGKKEETK) the composition is skewed to basic and acidic residues.

The protein localises to the cell membrane. Potential calcium-dependent cell-adhesion protein. May be involved in the establishment and maintenance of specific neuronal connections in the brain. The chain is Protocadherin alpha-11 (PCDHA11) from Homo sapiens (Human).